We begin with the raw amino-acid sequence, 255 residues long: Small ribosomal subunit protein eS1A (255 aa).

A compositionally biased stretch (basic residues) spans 1 to 18 (MAVGKNKRLSKGKKGQKK). Residues 1-20 (MAVGKNKRLSKGKKGQKKRV) are disordered. Ala2 carries the post-translational modification N-acetylalanine; partial. Thr245 carries the phosphothreonine modification. Residue Lys248 forms a Glycyl lysine isopeptide (Lys-Gly) (interchain with G-Cter in ubiquitin) linkage. Phosphothreonine is present on Thr254.

Belongs to the eukaryotic ribosomal protein eS1 family. As to quaternary structure, component of the small ribosomal subunit. Mature ribosomes consist of a small (40S) and a large (60S) subunit. The 40S subunit contains about 33 different proteins and 1 molecule of RNA (18S). The 60S subunit contains about 49 different proteins and 3 molecules of RNA (25S, 5.8S and 5S).

Its subcellular location is the cytoplasm. This chain is Small ribosomal subunit protein eS1A, found in Saccharomyces cerevisiae (strain RM11-1a) (Baker's yeast).